The following is a 413-amino-acid chain: Calsequestrin-2 (413 aa).

Residues Met-1 to Ala-19 form the signal peptide. Tyr-282 carries the phosphotyrosine modification. Asn-335 carries N-linked (GlcNAc...) asparagine glycosylation. Positions Val-365–Glu-413 are disordered. A compositionally biased stretch (acidic residues) spans Glu-373–Glu-413. Residues Ser-398 and Ser-405 each carry the phosphoserine modification.

Belongs to the calsequestrin family. As to quaternary structure, monomer, homodimer and homooligomer. Mostly monomeric in the absence of calcium. Forms higher oligomers in a calcium-dependent manner. Dimers associate to form tetramers, that then form linear homomer chains. Interacts with ASPH and TRDN. Phosphorylation in the C-terminus, probably by CK2, moderately increases calcium buffering capacity. In terms of processing, N-glycosylated. In terms of tissue distribution, detected in stomach and vas deferens (at protein level).

It is found in the sarcoplasmic reticulum lumen. Its function is as follows. Calsequestrin is a high-capacity, moderate affinity, calcium-binding protein and thus acts as an internal calcium store in muscle. Calcium ions are bound by clusters of acidic residues at the protein surface, especially at the interface between subunits. Can bind around 60 Ca(2+) ions. Regulates the release of lumenal Ca(2+) via the calcium release channel RYR2; this plays an important role in triggering muscle contraction. Plays a role in excitation-contraction coupling in the heart and in regulating the rate of heart beats. This is Calsequestrin-2 (Casq2) from Rattus norvegicus (Rat).